The primary structure comprises 424 residues: Adenylosuccinate synthetase (424 aa).

GTP-binding positions include 11 to 17 (GDEGKGK) and 39 to 41 (GHT). The active-site Proton acceptor is aspartate 12. The Mg(2+) site is built by aspartate 12 and glycine 39. Residues 12 to 15 (DEGK), 37 to 40 (NAGH), threonine 127, arginine 141, glutamine 223, threonine 238, and arginine 302 contribute to the IMP site. The Proton donor role is filled by histidine 40. 298–304 (TTTGRGR) contributes to the substrate binding site. Residues arginine 304, 330–332 (KLD), and 412–414 (SVG) each bind GTP.

This sequence belongs to the adenylosuccinate synthetase family. In terms of assembly, homodimer. Requires Mg(2+) as cofactor.

It is found in the cytoplasm. It catalyses the reaction IMP + L-aspartate + GTP = N(6)-(1,2-dicarboxyethyl)-AMP + GDP + phosphate + 2 H(+). It functions in the pathway purine metabolism; AMP biosynthesis via de novo pathway; AMP from IMP: step 1/2. Functionally, plays an important role in the de novo pathway of purine nucleotide biosynthesis. Catalyzes the first committed step in the biosynthesis of AMP from IMP. This is Adenylosuccinate synthetase from Methanosarcina barkeri (strain Fusaro / DSM 804).